Consider the following 333-residue polypeptide: Thiamine-monophosphate kinase (333 aa).

Mg(2+) is bound by residues aspartate 35, threonine 50, and aspartate 51. Histidine 58 serves as a coordination point for substrate. Aspartate 80 is a binding site for Mg(2+). ATP-binding positions include tyrosine 111, 128–129 (GD), and arginine 153. Aspartate 129 lines the Mg(2+) pocket. Aspartate 230 is a binding site for Mg(2+). Residue serine 232 participates in ATP binding. Residue aspartate 233 coordinates Mg(2+). Substrate contacts are provided by glutamate 278 and phenylalanine 330.

This sequence belongs to the thiamine-monophosphate kinase family.

It carries out the reaction thiamine phosphate + ATP = thiamine diphosphate + ADP. Its pathway is cofactor biosynthesis; thiamine diphosphate biosynthesis; thiamine diphosphate from thiamine phosphate: step 1/1. Its function is as follows. Catalyzes the ATP-dependent phosphorylation of thiamine-monophosphate (TMP) to form thiamine-pyrophosphate (TPP), the active form of vitamin B1. This is Thiamine-monophosphate kinase from Prochlorococcus marinus (strain SARG / CCMP1375 / SS120).